Here is a 240-residue protein sequence, read N- to C-terminus: MATLFIADLHLCVEEPAITAGFLRFLAGEARKADALYILGDLFEAWIGDDDPNPLHRQMAAAIKAVSDSGVPCYFIHGNRDFLLGKRFARESGMTLLPEEKVLELYGRRVLIMHGDTLCTDDAGYQAFRTKVHKPWLQTLFLALPLFVRKRIAVRMRANSKEANSSKSLAIMDVNQNAVVSAMEKHQVQWLIHGHTHRPAVHELIANQQPAFRVVLGAWHTEGSMVKVTADDVELIHFPF.

Mn(2+)-binding residues include D8, H10, D41, N79, and H114. 79-80 lines the substrate pocket; that stretch reads NR. Residues D122, S160, N164, K167, and H195 each coordinate substrate. The Mn(2+) site is built by H195 and H197.

Belongs to the LpxH family. Requires Mn(2+) as cofactor.

The protein localises to the cell inner membrane. It catalyses the reaction UDP-2-N,3-O-bis[(3R)-3-hydroxytetradecanoyl]-alpha-D-glucosamine + H2O = 2-N,3-O-bis[(3R)-3-hydroxytetradecanoyl]-alpha-D-glucosaminyl 1-phosphate + UMP + 2 H(+). The protein operates within glycolipid biosynthesis; lipid IV(A) biosynthesis; lipid IV(A) from (3R)-3-hydroxytetradecanoyl-[acyl-carrier-protein] and UDP-N-acetyl-alpha-D-glucosamine: step 4/6. Its function is as follows. Hydrolyzes the pyrophosphate bond of UDP-2,3-diacylglucosamine to yield 2,3-diacylglucosamine 1-phosphate (lipid X) and UMP by catalyzing the attack of water at the alpha-P atom. Involved in the biosynthesis of lipid A, a phosphorylated glycolipid that anchors the lipopolysaccharide to the outer membrane of the cell. This is UDP-2,3-diacylglucosamine hydrolase from Escherichia coli O157:H7.